Consider the following 298-residue polypeptide: MDKNIIIGAMTALITPFKNGKVDEQSYARLIKRQIENGIDAVVPVGTTGESATLTHEEHRTCIEIAVETCKGTKVKVLAGAGSNATHEAVGLAKFAKEHGADGILSVAPYYNKPTQQGLYEHYKAIAQSVDIPVLLYNVPGRTGCEISTDTIIKLFRDCENIYGVKEASGNIDKCVDLLAHEPRMMLISGEDAINYPILSNGGKGVISVTSNLLPDMISALTHFALDENYKEAKKINDELYNINKILFCESNPIPIKTAMYIAGLIESLEFRLPLCPPSKENFAKIEEVMKKYKIKGF.

Thr48 serves as a coordination point for pyruvate. Tyr137 (proton donor/acceptor) is an active-site residue. Residue Lys166 is the Schiff-base intermediate with substrate of the active site. Residue Ile207 coordinates pyruvate.

It belongs to the DapA family. In terms of assembly, homotetramer; dimer of dimers.

The protein resides in the cytoplasm. It carries out the reaction L-aspartate 4-semialdehyde + pyruvate = (2S,4S)-4-hydroxy-2,3,4,5-tetrahydrodipicolinate + H2O + H(+). It participates in amino-acid biosynthesis; L-lysine biosynthesis via DAP pathway; (S)-tetrahydrodipicolinate from L-aspartate: step 3/4. Functionally, catalyzes the condensation of (S)-aspartate-beta-semialdehyde [(S)-ASA] and pyruvate to 4-hydroxy-tetrahydrodipicolinate (HTPA). The chain is 4-hydroxy-tetrahydrodipicolinate synthase from Campylobacter jejuni subsp. jejuni serotype O:6 (strain 81116 / NCTC 11828).